We begin with the raw amino-acid sequence, 546 residues long: Chaperonin GroEL 4 (546 aa).

Residues 30 to 33 (TLGP), K51, 87 to 91 (DGTTT), G415, and D496 contribute to the ATP site.

The protein belongs to the chaperonin (HSP60) family. In terms of assembly, forms a cylinder of 14 subunits composed of two heptameric rings stacked back-to-back. Interacts with the co-chaperonin GroES.

It localises to the cytoplasm. The catalysed reaction is ATP + H2O + a folded polypeptide = ADP + phosphate + an unfolded polypeptide.. Together with its co-chaperonin GroES, plays an essential role in assisting protein folding. The GroEL-GroES system forms a nano-cage that allows encapsulation of the non-native substrate proteins and provides a physical environment optimized to promote and accelerate protein folding. The protein is Chaperonin GroEL 4 of Bradyrhizobium sp. (strain BTAi1 / ATCC BAA-1182).